Reading from the N-terminus, the 419-residue chain is UDP-N-acetylglucosamine 1-carboxyvinyltransferase (419 aa).

22–23 serves as a coordination point for phosphoenolpyruvate; it reads KN. Residue Arg-95 participates in UDP-N-acetyl-alpha-D-glucosamine binding. The active-site Proton donor is the Cys-119. 2-(S-cysteinyl)pyruvic acid O-phosphothioketal is present on Cys-119. Residues 164 to 167, Asp-308, and Ile-330 each bind UDP-N-acetyl-alpha-D-glucosamine; that span reads KVSV.

The protein belongs to the EPSP synthase family. MurA subfamily.

The protein localises to the cytoplasm. The enzyme catalyses phosphoenolpyruvate + UDP-N-acetyl-alpha-D-glucosamine = UDP-N-acetyl-3-O-(1-carboxyvinyl)-alpha-D-glucosamine + phosphate. It functions in the pathway cell wall biogenesis; peptidoglycan biosynthesis. Functionally, cell wall formation. Adds enolpyruvyl to UDP-N-acetylglucosamine. This Rickettsia massiliae (strain Mtu5) protein is UDP-N-acetylglucosamine 1-carboxyvinyltransferase.